The following is a 350-amino-acid chain: Melatonin receptor type 1A (350 aa).

Residues 1–29 lie on the Extracellular side of the membrane; that stretch reads MQGNGSALPNASQPVLRGDGARPSWLASA. 2 N-linked (GlcNAc...) asparagine glycosylation sites follow: Asn4 and Asn10. A helical transmembrane segment spans residues 30-50; the sequence is LACVLIFTIVVDILGNLLVIL. Topologically, residues 51–63 are cytoplasmic; the sequence is SVYRNKKLRNAGN. The helical transmembrane segment at 64–84 threads the bilayer; the sequence is IFVVSLAVADLVVAIYPYPLV. Topologically, residues 85 to 102 are extracellular; the sequence is LMSIFNNGWNLGYLHCQV. A disulfide bond links Cys100 and Cys177. Residues 103–123 form a helical membrane-spanning segment; that stretch reads SGFLMGLSVIGSIFNITGIAI. Over 124–142 the chain is Cytoplasmic; it reads NRYCYICHSLKYDKLYSSK. The helical transmembrane segment at 143–163 threads the bilayer; that stretch reads NSLCYVLLIWLLTLAAVLPNL. The melatonin site is built by Asn162 and Gln181. Over 164-187 the chain is Extracellular; it reads RAGTLQYDPRIYSCTFAQSVSSAY. The helical transmembrane segment at 188–208 threads the bilayer; sequence TIAVVVFHFLVPMIIVIFCYL. At 209–240 the chain is on the cytoplasmic side; it reads RIWILVLQVRQRVKPDRKPKLKPQDFRNFVTM. Residues 241 to 261 form a helical membrane-spanning segment; sequence FVVFVLFAICWAPLNFIGLAV. Topologically, residues 262–274 are extracellular; the sequence is ASDPASMVPRIPE. The chain crosses the membrane as a helical span at residues 275 to 295; sequence WLFVASYYMAYFNSCLNAIIY. The Cytoplasmic portion of the chain corresponds to 296–350; that stretch reads GLLNQNFRKEYRRIIVSLCTARVFFVDSSNDVADRVKWKPSPLMTNNNVVKVDSV.

The protein belongs to the G-protein coupled receptor 1 family. As to expression, expressed in hypophyseal pars tuberalis and hypothalamic suprachiasmatic nuclei (SCN). Hippocampus.

It is found in the cell membrane. Functionally, high affinity receptor for melatonin. Likely to mediate the reproductive and circadian actions of melatonin. The activity of this receptor is mediated by pertussis toxin sensitive G proteins that inhibit adenylate cyclase activity. Possibly involved in sleep induction, by melatonin activation of the potassium channel KCNMA1/BK and the dissociation of G-beta and G-gamma subunits, thereby decreasing synaptic transmission. The protein is Melatonin receptor type 1A (MTNR1A) of Homo sapiens (Human).